A 97-amino-acid chain; its full sequence is Defensin-like protein 245 (97 aa).

A signal peptide spans 1 to 24 (MKFAAILLVTCVLFSLLPSHLSQG). Disulfide bonds link Cys39-Cys96, Cys50-Cys79, Cys58-Cys89, and Cys77-Cys91.

The protein belongs to the DEFL family. Flower buds and roots.

It localises to the secreted. In Arabidopsis thaliana (Mouse-ear cress), this protein is Defensin-like protein 245 (SCRL4).